A 679-amino-acid chain; its full sequence is Stress-70 protein, mitochondrial (679 aa).

Residues 1–46 constitute a mitochondrion transit peptide; the sequence is MISASRAAAARLVGAAASRGPTAARHQDSWNGLSHEAFRLVSRRDY. Residues 1–432 are interaction with NFS1; the sequence is MISASRAAAA…IQGGVLAGDV (432 aa). ADP contacts are provided by Thr63 and Asn64. Positions 63–431 are nucleotide-binding domain (NBD); that stretch reads TNSCVAVMEG…AIQGGVLAGD (369 aa). Lys76 carries the post-translational modification N6-acetyllysine. Thr87 is modified (phosphothreonine). An N6-acetyllysine; alternate mark is found at Lys135 and Lys138. 2 positions are modified to N6-succinyllysine; alternate: Lys135 and Lys138. Lys143 is modified (N6-acetyllysine). Residue Lys206 is modified to N6-acetyllysine; alternate. Lys206 is subject to N6-succinyllysine; alternate. Position 206 is an N6-malonyllysine; alternate (Lys206). Residues Lys234 and Lys288 each carry the N6-acetyllysine modification. Lys300 is subject to N6-acetyllysine; alternate. N6-succinyllysine; alternate is present on Lys300. The ADP site is built by Glu313, Lys316, and Ser320. Lys368 bears the N6-succinyllysine mark. Residues Gly388 and Arg391 each contribute to the ADP site. Lys394 carries the post-translational modification N6-succinyllysine. The residue at position 408 (Ser408) is a Phosphoserine. The interval 432–441 is interdomain linker; the sequence is VTDVLLLDVT. The interval 432–679 is interaction with FXN and ISCU; the sequence is VTDVLLLDVT…QKEDQKEEKQ (248 aa). Positions 442 to 679 are substrate-binding domain (SBD); it reads PLSLGIETLG…QKEDQKEEKQ (238 aa). At Arg513 the chain carries Omega-N-methylarginine. An N6-acetyllysine; alternate mark is found at Lys567 and Lys600. N6-succinyllysine; alternate occurs at positions 567 and 600. N6-succinyllysine is present on Lys610. Lys612 is subject to N6-acetyllysine. Residue Lys646 is modified to N6-acetyllysine; alternate. The residue at position 646 (Lys646) is an N6-succinyllysine; alternate. The interval 656 to 679 is disordered; the sequence is ASEREGSGSSGTGEQKEDQKEEKQ. Positions 669 to 679 are enriched in basic and acidic residues; the sequence is EQKEDQKEEKQ.

The protein belongs to the heat shock protein 70 family. Interacts strongly with the intermediate form of FXN and weakly with its mature form. Interacts with HSCB. Associates with the mitochondrial contact site and cristae organizing system (MICOS) complex, composed of at least MICOS10/MIC10, CHCHD3/MIC19, CHCHD6/MIC25, APOOL/MIC27, IMMT/MIC60, APOO/MIC23/MIC26 and QIL1/MIC13. This complex was also known under the names MINOS or MitOS complex. The MICOS complex associates with mitochondrial outer membrane proteins SAMM50, MTX1, MTX2 and DNAJC11, mitochondrial inner membrane protein TMEM11 and with HSPA9. Interacts with DNLZ, the interaction is required to prevent self-aggregation. Interacts with TESPA1. Interacts with PDPN. Interacts with NFU1, NFS1 and ISCU. Interacts with TP53; the interaction promotes TP53 degradation. Interacts (via SBD domain) with UBXN2A; the interaction with UBXN2A inhibits HSPA9 interaction with and degradation of TP53, thereby promotes TP53 translocation to the nucleus. Interacts with ITPR1 AND VDAC1; this interaction couples ITPR1 to VDAC1. Component of the TIM23 mitochondrial inner membrane pre-sequence translocase complex.

Its subcellular location is the mitochondrion. The protein resides in the nucleus. It is found in the nucleolus. The protein localises to the cytoplasm. It localises to the mitochondrion matrix. The catalysed reaction is ATP + H2O = ADP + phosphate + H(+). Its activity is regulated as follows. The chaperone activity is regulated by ATP-induced allosteric coupling of the nucleotide-binding (NBD) and substrate-binding (SBD) domains. ATP binding in the NBD leads to a conformational change in the NBD, which is transferred through the interdomain linker (IDL) to the substrate-binding domain (SBD). This elicits a reduced substrate affinity and a faster substrate exchange rate. Upon hydrolysis of ATP to ADP, the protein undergoes a conformational change that increases its affinity for substrate proteins. It cycles through repeated phases of ATP hydrolysis and nucleotide exchange, facilitating repeated cycles of substrate binding and release. Functions in collaboration with co-chaperones. Functions with the co-chaperone, DNLZ, to maintain solubility and regulate ATP hydrolysis. Nucleotide exchange factors, GRPEL1 and GRPEL2, accelerate nucleotide exchange. In terms of biological role, mitochondrial chaperone that plays a key role in mitochondrial protein import, folding, and assembly. Plays an essential role in the protein quality control system, the correct folding of proteins, the re-folding of misfolded proteins, and the targeting of proteins for subsequent degradation. These processes are achieved through cycles of ATP binding, ATP hydrolysis, and ADP release, mediated by co-chaperones. In mitochondria, it associates with the TIM (translocase of the inner membrane) protein complex to assist in the import and folding of mitochondrial proteins. Plays an important role in mitochondrial iron-sulfur cluster (ISC) biogenesis, interacts with and stabilizes ISC cluster assembly proteins FXN, NFU1, NFS1 and ISCU. Regulates erythropoiesis via stabilization of ISC assembly. Regulates mitochondrial calcium-dependent apoptosis by coupling two calcium channels, ITPR1 and VDAC1, at the mitochondria-associated endoplasmic reticulum (ER) membrane to facilitate calcium transport from the ER lumen to the mitochondria intermembrane space, providing calcium for the downstream calcium channel MCU, which releases it into the mitochondrial matrix. Although primarily located in the mitochondria, it is also found in other cellular compartments. In the cytosol, it associates with proteins involved in signaling, apoptosis, or senescence. It may play a role in cell cycle regulation via its interaction with and promotion of degradation of TP53. May play a role in the control of cell proliferation and cellular aging. Protects against reactive oxygen species (ROS). Extracellular HSPA9 plays a cytoprotective role by preventing cell lysis following immune attack by the membrane attack complex by disrupting formation of the complex. This Homo sapiens (Human) protein is Stress-70 protein, mitochondrial.